The following is a 572-amino-acid chain: Secreted triacylglycerol lipase LIP6 (572 aa).

Residues 1–23 form the signal peptide; that stretch reads MYSTSLLRWLVVALVSAVPLVTA. A disulfide bridge links C117 with C291. The active-site Nucleophile is S202. Residue D351 is part of the active site. N-linked (GlcNAc...) asparagine glycosylation is present at N360. H385 is a catalytic residue. The disordered stretch occupies residues 468-572; it reads KGGVWNDVLK…SSRRHVARFM (105 aa). Positions 491 to 511 are enriched in basic and acidic residues; the sequence is PESKKATKKYKSESKAEKKQP. A compositionally biased stretch (low complexity) spans 512–525; it reads DSIPSSSSKSSSDN. N-linked (GlcNAc...) asparagine glycosylation is present at N525. The segment covering 528–540 has biased composition (basic residues); sequence AHAKYHAHGHGHG. The span at 541–562 shows a compositional bias: low complexity; the sequence is HASSNSNNGHSHSAKESSTSKG. The segment covering 563 to 572 has biased composition (basic residues); it reads SSRRHVARFM.

The protein belongs to the AB hydrolase superfamily. Lipase family. Class Lip subfamily.

The protein localises to the secreted. It is found in the cell wall. The catalysed reaction is a triacylglycerol + H2O = a diacylglycerol + a fatty acid + H(+). It carries out the reaction a monoacylglycerol + H2O = glycerol + a fatty acid + H(+). The enzyme catalyses a diacylglycerol + H2O = a monoacylglycerol + a fatty acid + H(+). Functionally, secreted lipase involved in Dandruff and seborrheic dermatitis (D/SD) probably via lipase-mediated breakdown of sebaceous lipids and release of irritating free fatty acids. Shows only minimal activity against triolein. Mostly converts monoolein to di- and triolein, while free fatty acids are only produced in low amounts. The protein is Secreted triacylglycerol lipase LIP6 of Malassezia globosa (strain ATCC MYA-4612 / CBS 7966) (Dandruff-associated fungus).